The primary structure comprises 484 residues: Malonate-semialdehyde dehydrogenase 2 (484 aa).

The NAD(+) site is built by Phe-153, Lys-177, Glu-180, Arg-181, Ser-230, and Thr-252. Cys-285 acts as the Nucleophile in catalysis. NAD(+) is bound at residue Glu-385.

Belongs to the aldehyde dehydrogenase family. IolA subfamily. In terms of assembly, homotetramer.

It catalyses the reaction 3-oxopropanoate + NAD(+) + CoA + H2O = hydrogencarbonate + acetyl-CoA + NADH + H(+). The catalysed reaction is 2-methyl-3-oxopropanoate + NAD(+) + CoA + H2O = propanoyl-CoA + hydrogencarbonate + NADH + H(+). Its pathway is polyol metabolism; myo-inositol degradation into acetyl-CoA; acetyl-CoA from myo-inositol: step 7/7. In terms of biological role, catalyzes the oxidation of malonate semialdehyde (MSA) and methylmalonate semialdehyde (MMSA) into acetyl-CoA and propanoyl-CoA, respectively. Is involved in a myo-inositol catabolic pathway. Bicarbonate, and not CO2, is the end-product of the enzymatic reaction. This chain is Malonate-semialdehyde dehydrogenase 2, found in Geobacillus kaustophilus (strain HTA426).